A 401-amino-acid chain; its full sequence is Stearoyl-[acyl-carrier-protein] 9-desaturase 3, chloroplastic (401 aa).

The disordered stretch occupies residues 1-31; the sequence is MSMALLLTSPAMKQKPAVITSPRRGSSPSRR. A chloroplast-targeting transit peptide spans 1 to 35; it reads MSMALLLTSPAMKQKPAVITSPRRGSSPSRRLRVS. The Fe cation site is built by Glu140, Glu178, His181, Glu231, Glu264, and His267.

The protein belongs to the fatty acid desaturase type 2 family. As to quaternary structure, homodimer. It depends on Fe(2+) as a cofactor. Ubiquitously expressed with a preference in leaves, flowers and stems.

It localises to the plastid. The protein resides in the chloroplast. It carries out the reaction octadecanoyl-[ACP] + 2 reduced [2Fe-2S]-[ferredoxin] + O2 + 2 H(+) = (9Z)-octadecenoyl-[ACP] + 2 oxidized [2Fe-2S]-[ferredoxin] + 2 H2O. Its pathway is lipid metabolism; fatty acid metabolism. In terms of biological role, converts stearoyl-ACP to oleoyl-ACP by introduction of a cis double bond between carbons 9 and 10 of the acyl chain. Also able to convert palmitoyl-ACP to palmitoleoyl-ACP at the C9 position. Exhibits delta-9 palmitoyl-[acyl-carrier-protein] desaturase (PAD) activity. Involved in omega-7 monounsaturated fatty acid biosynthesis, especially in the endosperm oil. In Arabidopsis thaliana (Mouse-ear cress), this protein is Stearoyl-[acyl-carrier-protein] 9-desaturase 3, chloroplastic (S-ACP-DES3).